We begin with the raw amino-acid sequence, 330 residues long: Aspartate--ammonia ligase (330 aa).

Belongs to the class-II aminoacyl-tRNA synthetase family. AsnA subfamily.

The protein localises to the cytoplasm. The enzyme catalyses L-aspartate + NH4(+) + ATP = L-asparagine + AMP + diphosphate + H(+). It participates in amino-acid biosynthesis; L-asparagine biosynthesis; L-asparagine from L-aspartate (ammonia route): step 1/1. This is Aspartate--ammonia ligase from Streptococcus pyogenes serotype M3 (strain ATCC BAA-595 / MGAS315).